We begin with the raw amino-acid sequence, 268 residues long: MAKVPDLFEDLKNCYSENEDYSSEIDHLSLNQKSFYDASYEPLREDQMNKFMSLDTSETSKTSKLSFKENVVMVAASGKILKKRRLSLNQFITDDDLEAIANNTEEEIIKPRSAHYSFQSNVKYNFMRVIHQECILNDALNQSIIRDMSGPYLTATTLNNLEEAVKFDMVAYVSEEDSQLPVTLRISKTQLFVSAQNEDEPVLLKEMPETPKIIKDETNLLFFWEKHGSMDYFKSVAHPKLFIATKQEKLVHMASGPPSITDFQILEK.

The propeptide occupies 1–112 (MAKVPDLFED…NTEEEIIKPR (112 aa)). Lys82 carries the N6-acetyllysine modification. The nuclear localization signal (NLS) stretch occupies residues 82–86 (KKRRL). Phosphoserine is present on Ser87. 2 N-linked (GlcNAc...) asparagine glycosylation sites follow: Asn102 and Asn141.

The protein belongs to the IL-1 family. As to quaternary structure, monomer. Interacts with TMED10; the interaction mediates the translocation from the cytoplasm into the ERGIC (endoplasmic reticulum-Golgi intermediate compartment) and thereby secretion. Interacts with IL1R1. Interacts with S100A13; this interaction is the first step in the export of IL1A, followed by direct translocation of this complex across the plasma membrane. Post-translationally, acetylated within its nuclear localization sequence, which impacts subcellular localization. Proteolytic processed by CAPN1 in a calcium-dependent manner. Cleavage from 31 kDa precursor to 18 kDa biologically active molecules. In terms of processing, phosphorylated. Phosphorylation greatly enhances susceptibility to digestion and promotes the conversion of pre-IL1A alpha to the biologically active IL1A.

The protein localises to the nucleus. It localises to the cytoplasm. Its subcellular location is the secreted. Functionally, cytokine constitutively present intracellularly in nearly all resting non-hematopoietic cells that plays an important role in inflammation and bridges the innate and adaptive immune systems. After binding to its receptor IL1R1 together with its accessory protein IL1RAP, forms the high affinity interleukin-1 receptor complex. Signaling involves the recruitment of adapter molecules such as MYD88, IRAK1 or IRAK4. In turn, mediates the activation of NF-kappa-B and the three MAPK pathways p38, p42/p44 and JNK pathways. Within the cell, acts as an alarmin and cell death results in its liberation in the extracellular space after disruption of the cell membrane to induce inflammation and alert the host to injury or damage. In addition to its role as a danger signal, which occurs when the cytokine is passively released by cell necrosis, directly senses DNA damage and acts as signal for genotoxic stress without loss of cell integrity. This is Interleukin-1 alpha (IL1A) from Bos taurus (Bovine).